An 89-amino-acid polypeptide reads, in one-letter code: Small ribosomal subunit protein uS15 (89 aa).

Residues 1–21 (MALTTEEKKQVLSEYGLHETD) show a composition bias toward basic and acidic residues. The disordered stretch occupies residues 1 to 24 (MALTTEEKKQVLSEYGLHETDTGS).

The protein belongs to the universal ribosomal protein uS15 family. As to quaternary structure, part of the 30S ribosomal subunit. Forms a bridge to the 50S subunit in the 70S ribosome, contacting the 23S rRNA.

One of the primary rRNA binding proteins, it binds directly to 16S rRNA where it helps nucleate assembly of the platform of the 30S subunit by binding and bridging several RNA helices of the 16S rRNA. Functionally, forms an intersubunit bridge (bridge B4) with the 23S rRNA of the 50S subunit in the ribosome. The sequence is that of Small ribosomal subunit protein uS15 from Rhodococcus jostii (strain RHA1).